We begin with the raw amino-acid sequence, 175 residues long: Orotate phosphoribosyltransferase (175 aa).

5-phospho-alpha-D-ribose 1-diphosphate contacts are provided by residues arginine 88, lysine 89, lysine 92, and 114-122; that span reads EDVVTTARG. Orotate is bound by residues threonine 118 and arginine 146.

This sequence belongs to the purine/pyrimidine phosphoribosyltransferase family. PyrE subfamily. Homodimer. Mg(2+) serves as cofactor.

It carries out the reaction orotidine 5'-phosphate + diphosphate = orotate + 5-phospho-alpha-D-ribose 1-diphosphate. The protein operates within pyrimidine metabolism; UMP biosynthesis via de novo pathway; UMP from orotate: step 1/2. In terms of biological role, catalyzes the transfer of a ribosyl phosphate group from 5-phosphoribose 1-diphosphate to orotate, leading to the formation of orotidine monophosphate (OMP). The sequence is that of Orotate phosphoribosyltransferase from Methanocella arvoryzae (strain DSM 22066 / NBRC 105507 / MRE50).